A 948-amino-acid chain; its full sequence is MKKNIALMALTGILTLASCGQNGTGTTPTADACATANTCSVTVNISGVSSADFDVTMDGKTTSMTLSNGQKLPVAKTGTVTLTPKAKDGYTTPAAQSTTISSTNLTPSVNFAYTTVPSTGNGNGNGGTTPTQPFTLNITSPTNGAAATTGTPIRVVFTSSVALSSATCKIGNSAAVNAQVSSTGGYCDVTPTTAGGGLITVTGTANGQTVSSTVTVDVKAPVVDNRYGTVTPAGDQELTLTNEGIVKDADNGWRRLGQGVSTPSDPNGNVDIYVKGTVNFSVNAAAGSKVEVFLARTTGSDVPTNDDVQAGDVLRSVASTSGTETFSLDSRRLAEFDGVRKWIVVRINGTQVTYQPVIADNKGPQQPDPELNGVQNAYSNILNNYNNSGLTYVRGDVNVFTGNPSLQDREFGQAPLGSSFVQRRPSGFESIRYYLVPETAFGNKALQESDEMLRAKAIKSVATVVSAPVLEPGTVKATSFSRVIGSGATSTVTPKAQDNVTYRVYAISRDQLGNETASATYELVRFDNVGPTITGSVIRDTSDLPFASQEPERCLSDIATITLGGITDNAGGVGLNPGQGLTFTLGGRQIQAGQFDTNQLADGEYTIGFNSLTDALGNPVVSAPTNAKVYIDNTDPTVNFNRAVMQGTFASGERVSVESDASDGGCGVYETRLFWDTDNGVVDDATTTPAIGHPVQFARQRVTDGAKADSLNAGWNALQLPNGAGAVYLRALVVDRAGNATISTTPIVVNAKITNQARPLLGGFDAFKRNASAQFMSNSNAISGVNGTAVTPNTTANSALDNILSLDSVGTLTTNAYLPRGATETAITEKIRNVGAYGRFDATQWNRIRDYQLNTDPTLRSAYVNAGNLANQRGNNWRIRTPWVELGSSDTANTQQKFDFNSDLLNDFYFGRTFGNNDNVNLFSYDQFNGIVSGTAGAYSFYGETVQK.

Residues 1 to 17 form the signal peptide; the sequence is MKKNIALMALTGILTLA. 2 cysteine pairs are disulfide-bonded: C168–C187 and C554–C666.

In terms of processing, glycosylated. Contains tightly bound reducing sugars (six per polypeptide chain) and fatty acids (covalently bound and located in the N-terminal region).

The protein localises to the secreted. The protein resides in the cell wall. It is found in the S-layer. Its function is as follows. Shape maintenance, possible protection from noxious enzymes or exogenous and unsettling DNA, and may mediate homotypic cell-cell contacts. In Deinococcus radiodurans (strain ATCC 13939 / DSM 20539 / JCM 16871 / CCUG 27074 / LMG 4051 / NBRC 15346 / NCIMB 9279 / VKM B-1422 / R1), this protein is Hexagonally packed intermediate-layer surface protein (hpi).